The following is a 277-amino-acid chain: Glycerol-3-phosphate acyltransferase (277 aa).

Transmembrane regions (helical) follow at residues 3–23 (LFIF…AIIV), 55–75 (IMVM…AKLL), 79–99 (PVTV…PVFF), 111–131 (IGAL…TWLL), and 155–175 (LILV…ILVL). A disordered region spans residues 207 to 277 (SPATSAEQEF…PKTKTVKEKE (71 aa)). Residues 216–239 (FPGKEVIDTNIDETEKTEQAEAVK) show a composition bias toward basic and acidic residues. Basic residues-rich tracts occupy residues 240–253 (KPKA…AKKT) and 262–271 (KPRSTKPKTK).

This sequence belongs to the PlsY family. As to quaternary structure, probably interacts with PlsX.

The protein resides in the cell inner membrane. The enzyme catalyses an acyl phosphate + sn-glycerol 3-phosphate = a 1-acyl-sn-glycero-3-phosphate + phosphate. The protein operates within lipid metabolism; phospholipid metabolism. In terms of biological role, catalyzes the transfer of an acyl group from acyl-phosphate (acyl-PO(4)) to glycerol-3-phosphate (G3P) to form lysophosphatidic acid (LPA). This enzyme utilizes acyl-phosphate as fatty acyl donor, but not acyl-CoA or acyl-ACP. This is Glycerol-3-phosphate acyltransferase from Legionella pneumophila (strain Paris).